A 422-amino-acid chain; its full sequence is Charged multivesicular body protein 7 (422 aa).

Residues 234-304 (KLLSERLQSA…ERISAAETDR (71 aa)) adopt a coiled-coil conformation. Residues 394 to 422 (RPTEWKMDQAAHSPADGSFLRSVPEPMLQ) are disordered.

The protein belongs to the SNF7 family.

Its subcellular location is the cytoplasm. The protein localises to the nucleus envelope. ESCRT-III-like protein required to recruit the ESCRT-III complex to the nuclear envelope during late anaphase. Together with SPAST, the ESCRT-III complex promotes nuclear envelope sealing and mitotic spindle disassembly during late anaphase. Plays a role in the endosomal sorting pathway. The polypeptide is Charged multivesicular body protein 7 (chmp7) (Xenopus laevis (African clawed frog)).